The primary structure comprises 644 residues: Transmembrane 9 superfamily member 9 (644 aa).

The first 27 residues, 1–27, serve as a signal peptide directing secretion; it reads MEFYRSSRRLQILGSVILLLSIHVAHS. The Lumenal portion of the chain corresponds to 28–281; that stretch reads FYLPGVAPQD…YLLMSDNQIH (254 aa). The helical transmembrane segment at 282 to 302 threads the bilayer; it reads WFSIVNSLMIVLFLSGMVAMI. At 303–351 the chain is on the cytoplasmic side; sequence MLRTLYRDISRYNELETQEEAQEETGWKLVHGDVFRPPANSDLLCVYVG. The chain crosses the membrane as a helical span at residues 352 to 372; the sequence is TGVQCLGMVLVTMIFAMLGFL. The Lumenal segment spans residues 373 to 377; that stretch reads SPSNR. Residues 378–398 form a helical membrane-spanning segment; that stretch reads GGLMTAMLLLWVFMGLFAGYA. Over 399 to 418 the chain is Cytoplasmic; the sequence is SSRLYKMFKGTEWKRIAFRT. Residues 419–439 form a helical membrane-spanning segment; that stretch reads AFLFPAVVSAIFFVLNALIWG. At 440 to 451 the chain is on the lumenal side; it reads QKSSGAVPFGTM. Residues 452–472 form a helical membrane-spanning segment; sequence FALIFLWFGISVPLVFVGAYL. The Cytoplasmic segment spans residues 473–501; it reads GFKKPPLDDPVKTNKIPRQIPEQAWYMNP. Residues 502–522 form a helical membrane-spanning segment; the sequence is IFSILIGGILPFGAVFIELFF. The Lumenal segment spans residues 523-534; it reads ILTSIWLNQFYY. A helical transmembrane segment spans residues 535–555; that stretch reads IFGFLFLVFVILMVTCAEITI. Over 556-573 the chain is Cytoplasmic; sequence VLCYFQLCSEDYLWWWRS. A helical membrane pass occupies residues 574–594; that stretch reads YLTSGSSAVYLFLYAAFYFFT. Over 595 to 600 the chain is Lumenal; sequence KLQITK. A helical membrane pass occupies residues 601–621; sequence LVSAMLYFGYMLIASYAFFVL. Residues 622–644 are Cytoplasmic-facing; sequence TGTIGFYACLWFTRLIYSSVKID. Positions 633 to 638 match the Endoplasmic reticulum export signal motif; the sequence is FTRLIY. The Golgi retention signal signature appears at 642–644; that stretch reads KID.

Belongs to the nonaspanin (TM9SF) (TC 9.A.2) family.

The protein resides in the endosome membrane. It is found in the golgi apparatus membrane. This is Transmembrane 9 superfamily member 9 from Arabidopsis thaliana (Mouse-ear cress).